We begin with the raw amino-acid sequence, 548 residues long: T-complex protein 1 subunit theta (548 aa).

A2 carries the post-translational modification N-acetylalanine. 2 residues coordinate ADP: Y47 and G48. D99 is a binding site for Mg(2+). ADP contacts are provided by G100, T101, N102, F103, M169, S170, K171, G412, and D499. Positions 100, 101, and 102 each coordinate ATP. The ATP site is built by S170, K171, G412, D499, and K504. At Y505 the chain carries Phosphotyrosine. Positions 529–548 (PAGGPKPPSGKKDWDEDQND) are disordered.

Component of the chaperonin-containing T-complex (TRiC), a hexadecamer composed of two identical back-to-back stacked rings enclosing a protein folding chamber. Each ring is made up of eight different subunits: TCP1/CCT1, CCT2, CCT3, CCT4, CCT5, CCT6A/CCT6, CCT7, CCT8.

It is found in the cytoplasm. Its subcellular location is the cytoskeleton. The protein localises to the microtubule organizing center. The protein resides in the centrosome. It localises to the cilium basal body. The enzyme catalyses ATP + H2O = ADP + phosphate + H(+). In terms of biological role, component of the chaperonin-containing T-complex (TRiC), a molecular chaperone complex that assists the folding of actin, tubulin and other proteins upon ATP hydrolysis. The polypeptide is T-complex protein 1 subunit theta (Gallus gallus (Chicken)).